The primary structure comprises 193 residues: Holliday junction branch migration complex subunit RuvA (193 aa).

The domain I stretch occupies residues 1-64; the sequence is MITSLTGTIL…EDAHLLYGFM (64 aa). The tract at residues 65–139 is domain II; that stretch reads TVAERDMFRL…DKMGGIAPGP (75 aa). The segment at 139 to 143 is flexible linker; that stretch reads PMGRG. The domain III stretch occupies residues 144–193; the sequence is GAGDPRQEAIAALLTLGYKPAQASQAIAGLADGLGLEDLIRQSLQNLSRH.

The protein belongs to the RuvA family. As to quaternary structure, homotetramer. Forms an RuvA(8)-RuvB(12)-Holliday junction (HJ) complex. HJ DNA is sandwiched between 2 RuvA tetramers; dsDNA enters through RuvA and exits via RuvB. An RuvB hexamer assembles on each DNA strand where it exits the tetramer. Each RuvB hexamer is contacted by two RuvA subunits (via domain III) on 2 adjacent RuvB subunits; this complex drives branch migration. In the full resolvosome a probable DNA-RuvA(4)-RuvB(12)-RuvC(2) complex forms which resolves the HJ.

Its subcellular location is the cytoplasm. Functionally, the RuvA-RuvB-RuvC complex processes Holliday junction (HJ) DNA during genetic recombination and DNA repair, while the RuvA-RuvB complex plays an important role in the rescue of blocked DNA replication forks via replication fork reversal (RFR). RuvA specifically binds to HJ cruciform DNA, conferring on it an open structure. The RuvB hexamer acts as an ATP-dependent pump, pulling dsDNA into and through the RuvAB complex. HJ branch migration allows RuvC to scan DNA until it finds its consensus sequence, where it cleaves and resolves the cruciform DNA. The chain is Holliday junction branch migration complex subunit RuvA from Acidithiobacillus ferrooxidans (strain ATCC 53993 / BNL-5-31) (Leptospirillum ferrooxidans (ATCC 53993)).